The chain runs to 471 residues: UTP--glucose-1-phosphate uridylyltransferase (471 aa).

UTP is bound by residues 87–90 (LNGG), lysine 101, glutamine 164, and glycine 193. Substrate is bound at residue 89–90 (GG). Substrate is bound by residues histidine 194 and 222-224 (NSD). UTP-binding residues include aspartate 224 and lysine 362.

This sequence belongs to the UDPGP type 1 family.

It is found in the cytoplasm. The enzyme catalyses alpha-D-glucose 1-phosphate + UTP + H(+) = UDP-alpha-D-glucose + diphosphate. In terms of biological role, plays a central role as a glucosyl donor in cellular metabolic pathways. The polypeptide is UTP--glucose-1-phosphate uridylyltransferase (Pyrus pyrifolia (Chinese pear)).